Here is a 466-residue protein sequence, read N- to C-terminus: Glutamate--tRNA ligase 1 (466 aa).

A 'HIGH' region motif is present at residues 9–19; the sequence is PSPTGLLHIGN. The 'KMSKS' region motif lies at 238-242; sequence KLSKR. An ATP-binding site is contributed by lysine 241.

The protein belongs to the class-I aminoacyl-tRNA synthetase family. Glutamate--tRNA ligase type 1 subfamily. In terms of assembly, monomer.

Its subcellular location is the cytoplasm. The catalysed reaction is tRNA(Glu) + L-glutamate + ATP = L-glutamyl-tRNA(Glu) + AMP + diphosphate. Catalyzes the attachment of glutamate to tRNA(Glu) in a two-step reaction: glutamate is first activated by ATP to form Glu-AMP and then transferred to the acceptor end of tRNA(Glu). This is Glutamate--tRNA ligase 1 from Gluconacetobacter diazotrophicus (strain ATCC 49037 / DSM 5601 / CCUG 37298 / CIP 103539 / LMG 7603 / PAl5).